The following is a 489-amino-acid chain: MAEEKSTLGKIFTDWQVLIVLVLVILSVLSIYAIPPALDKGISGNLQLGLDLVGGSWIQLSFKSEVIGYESDMSQSDFITQLSEKLDADVIPVTSSSVEIREYYTKEELESVLAGMGAKLVTYEQGISKETADTVKGILEDKVNTLGTKDVQINTLTGANDVTKYVRVELAGTDINTAQEIVSSQGKFEIRIVTSGNETERVLSGDAVTSVSTPSQRNNYWGVGFTLSAEGAEALRDACIQYGAVTDPDSHNLVMLLDGEQVYSAPLSSDLAAKLSKGPVNDLSASTGYGEEGYNDAEVLEIHLRAGALPVDVEIAGSSSVTAERGEFIQIVCIAAAILGLLAVAFMVYYRYREPSIVVPMILVNLSEIIILLGIARYIQQLDLASIAGLIAVIGTGIDQLVVITDEVLHEGRVPSPSLYLKRFKRALGIITVSASTTIFAMLPLALMDLSTLKGFAIITILGVLIGVIFTRPAYGKIIMAILSKKPAK.

Transmembrane regions (helical) follow at residues 17 to 37 (VLIV…IPPA), 328 to 348 (FIQI…AFMV), 356 to 376 (SIVV…LGIA), 384 to 404 (LASI…LVVI), 428 to 448 (LGII…LALM), and 450 to 470 (LSTL…GVIF).

The protein belongs to the SecD/SecF family. SecD subfamily. In terms of assembly, part of the protein translocation apparatus. Forms a complex with SecF.

It is found in the cell membrane. Its function is as follows. Involved in protein export. This chain is Protein-export membrane protein SecD, found in Methanolacinia petrolearia (strain DSM 11571 / OCM 486 / SEBR 4847) (Methanoplanus petrolearius).